We begin with the raw amino-acid sequence, 437 residues long: MTHYHFVGIKGSGMSSLAQIMHDLGHEVQGSDIDQYVFTEKALRNKGIKILPFNPDNIEKGMTIIQGNAFSDTHEEIVRAHELDLEVIDYPTFLGHVIEQYISIAVTGAHGKTSTTGLLSHVMNGDKRTSFLIGDGTGLGIPQSEFFAFEACEYRRHFLSYHPDYAIMTNIDFDHPDYFKDVDDVTNAFQEMAYNVKKGIVAWGKDEHLRKIKADVPIYYYGLEKNEDIYADNIQITEHGTQFDVYIDGKYFDQFLSPQYGDHNILNTLAVIMVCHLEGLDIENIKEALETFGGVKRRFNETKLHNQVLVDDYAHHPREINATIETARKKYPNKEVIAVFQPHTFSRTKAFLEEFAESLSKADRVFLCDIFGSIREHDGSLTIQDLIDRIPGAQLIGENNVNILNEFDNAVILFMGAGDIQKIERAYMENNGVTNEF.

108-114 (GAHGKTS) contacts ATP.

It belongs to the MurCDEF family.

The protein localises to the cytoplasm. It carries out the reaction UDP-N-acetyl-alpha-D-muramate + L-alanine + ATP = UDP-N-acetyl-alpha-D-muramoyl-L-alanine + ADP + phosphate + H(+). The protein operates within cell wall biogenesis; peptidoglycan biosynthesis. In terms of biological role, cell wall formation. The protein is UDP-N-acetylmuramate--L-alanine ligase of Staphylococcus carnosus (strain TM300).